Reading from the N-terminus, the 143-residue chain is Hemoglobin subunit alpha-2 (143 aa).

Ser2 carries the post-translational modification N-acetylserine. The 142-residue stretch at 2–143 (SLSAKDKATV…LALALSEKYR (142 aa)) folds into the Globin domain. His60 contributes to the O2 binding site. Residue His89 participates in heme b binding.

Belongs to the globin family. In terms of assembly, hb 2 is a heterotetramer of two alpha-2 and two beta-1 chains. Hb 3 is a heterotetramer of two alpha-2 and two beta-2 chains. In terms of tissue distribution, red blood cells.

Involved in oxygen transport from gills to the various peripheral tissues. The protein is Hemoglobin subunit alpha-2 (hba2) of Boreogadus saida (Polar cod).